A 314-amino-acid polypeptide reads, in one-letter code: Phospholipid phosphatase-related protein type 5 (314 aa).

Helical transmembrane passes span 5–25, 61–81, 120–140, 194–214, 223–243, and 250–270; these read FSLT…VMLA, IPPV…IIVG, FLGI…AGQV, AALS…TIKA, VLCL…VAEY, and VIAG…CVVN.

It belongs to the PA-phosphatase related phosphoesterase family.

The protein resides in the cell membrane. Functionally, induces filopodia formation and promotes neurite growth. The chain is Phospholipid phosphatase-related protein type 5 from Xenopus laevis (African clawed frog).